A 495-amino-acid chain; its full sequence is Guanosine-5'-triphosphate,3'-diphosphate pyrophosphatase (495 aa).

It belongs to the GppA/Ppx family. GppA subfamily.

The catalysed reaction is guanosine 3'-diphosphate 5'-triphosphate + H2O = guanosine 3',5'-bis(diphosphate) + phosphate + H(+). It functions in the pathway purine metabolism; ppGpp biosynthesis; ppGpp from GTP: step 2/2. In terms of biological role, catalyzes the conversion of pppGpp to ppGpp. Guanosine pentaphosphate (pppGpp) is a cytoplasmic signaling molecule which together with ppGpp controls the 'stringent response', an adaptive process that allows bacteria to respond to amino acid starvation, resulting in the coordinated regulation of numerous cellular activities. This chain is Guanosine-5'-triphosphate,3'-diphosphate pyrophosphatase, found in Enterobacter sp. (strain 638).